The following is a 216-amino-acid chain: Cytidylate kinase (216 aa).

7–15 serves as a coordination point for ATP; it reads GPSGTGKST.

The protein belongs to the cytidylate kinase family. Type 1 subfamily.

The protein localises to the cytoplasm. The enzyme catalyses CMP + ATP = CDP + ADP. It carries out the reaction dCMP + ATP = dCDP + ADP. This chain is Cytidylate kinase, found in Chlamydia pneumoniae (Chlamydophila pneumoniae).